Consider the following 200-residue polypeptide: NADH-quinone oxidoreductase subunit C (200 aa).

The protein belongs to the complex I 30 kDa subunit family. In terms of assembly, NDH-1 is composed of 14 different subunits. Subunits NuoB, C, D, E, F, and G constitute the peripheral sector of the complex.

Its subcellular location is the cell inner membrane. It catalyses the reaction a quinone + NADH + 5 H(+)(in) = a quinol + NAD(+) + 4 H(+)(out). NDH-1 shuttles electrons from NADH, via FMN and iron-sulfur (Fe-S) centers, to quinones in the respiratory chain. The immediate electron acceptor for the enzyme in this species is believed to be ubiquinone. Couples the redox reaction to proton translocation (for every two electrons transferred, four hydrogen ions are translocated across the cytoplasmic membrane), and thus conserves the redox energy in a proton gradient. This chain is NADH-quinone oxidoreductase subunit C, found in Agrobacterium fabrum (strain C58 / ATCC 33970) (Agrobacterium tumefaciens (strain C58)).